A 353-amino-acid polypeptide reads, in one-letter code: UPF0283 membrane protein YcjF (353 aa).

A compositionally biased stretch (basic and acidic residues) spans 1–19 (MSEPLKPRIDFAEPLKEEP). The segment at 1 to 35 (MSEPLKPRIDFAEPLKEEPTSAFKAQQTFSEAESR) is disordered. A run of 3 helical transmembrane segments spans residues 70 to 90 (MVMGGLALFGASVVGQGIQWT), 100 to 120 (VALGGCAAGALIVGAGVGSVV), and 213 to 233 (ESTLMIAVSPLALVDMAFIAW).

It belongs to the UPF0283 family.

It localises to the cell inner membrane. The chain is UPF0283 membrane protein YcjF from Salmonella agona (strain SL483).